Consider the following 369-residue polypeptide: MAAARLPSPAPVAHPPALRARPLAPHLYAALPRAPYPAWQEPLPLPEGGDHPVPPKKKIKVAPLLPERADQPVVTSNSATTTRPQLCAPYDDEIEATLRAMETNPAERPSPYFLETTQGGRMTALVRASMIAFMDEFSRFHELADGTLQRAAYFLDRYLSVTPESDDALQLRLVGATAVFLAAKYEDQYTLRKIDASMVAARRGYTSETRHKMVSIMETEMLAALGFNLGGPTAYTFVEHFTRYYGDGEEEELLKEAAHRFADGSLLTYGFHRYLPSIVAASSIFLARLDVLGHEPWSQDLAELTGYKAIDLMGCVCDMEEKSRRAAAQHHLESKPAGAAGVGINSSGDDHTRPIRPAHLYIVSCRCSW.

A disordered region spans residues A328–D350.

This sequence belongs to the cyclin family. Cyclin F subfamily.

This chain is Putative cyclin-F1-1 (CYCF1-1), found in Oryza sativa subsp. japonica (Rice).